Consider the following 272-residue polypeptide: MARLAAFDMDGTLLMPDHHLGRETIATLARLRERDITLTFATGRHVLEMRHILGTLSLDAYLITGNGTRIHSLEGDVLHRQDLDPQVADTVMHHAWDTRASMHVFNDNGWFTGQEIPALLQAHVYSGFRYQVIDIKSIPAHQVTKICFCGDHDDLIRLRIQLNEALEERAHLCFSAVDCLEVLPLGCNKGSALAVLSNHLGLSLADCMAFGDAMNDREMLGSVGRGLIMGNAMPQLIAALPHLSVIGHCGNQAVSHFLTHWLDNPHLPYSPE.

Residue D8 is the Nucleophile of the active site. Mg(2+) contacts are provided by D8, D10, and D212.

The protein belongs to the HAD-like hydrolase superfamily. Cof family. Mg(2+) serves as cofactor.

The catalysed reaction is 4-amino-2-methyl-5-(diphosphooxymethyl)pyrimidine + H2O = 4-amino-2-methyl-5-(phosphooxymethyl)pyrimidine + phosphate + H(+). In terms of biological role, catalyzes the hydrolysis of 4-amino-2-methyl-5-hydroxymethylpyrimidine pyrophosphate (HMP-PP) to 4-amino-2-methyl-5-hydroxymethylpyrimidine phosphate (HMP-P). The chain is HMP-PP phosphatase from Salmonella enteritidis PT4 (strain P125109).